Consider the following 211-residue polypeptide: Large ribosomal subunit protein uL4 (211 aa).

Positions 41–87 (QAHARQGTASTLTRSEVRGGGRKPYKQKGTGRARQGSIRTPLRPGGG) are disordered. The span at 60-71 (GGRKPYKQKGTG) shows a compositional bias: basic residues.

Belongs to the universal ribosomal protein uL4 family. Part of the 50S ribosomal subunit.

One of the primary rRNA binding proteins, this protein initially binds near the 5'-end of the 23S rRNA. It is important during the early stages of 50S assembly. It makes multiple contacts with different domains of the 23S rRNA in the assembled 50S subunit and ribosome. Its function is as follows. Forms part of the polypeptide exit tunnel. The sequence is that of Large ribosomal subunit protein uL4 from Parasynechococcus marenigrum (strain WH8102).